The sequence spans 531 residues: O-phosphoserine--tRNA(Cys) ligase (531 aa).

Substrate is bound by residues 189-191, 234-236, 276-277, and Asn319; these read HMT, SAS, and YY.

This sequence belongs to the class-II aminoacyl-tRNA synthetase family. O-phosphoseryl-tRNA(Cys) synthetase subfamily. As to quaternary structure, homotetramer. Interacts with SepCysS.

The enzyme catalyses tRNA(Cys) + O-phospho-L-serine + ATP = O-phospho-L-seryl-tRNA(Cys) + AMP + diphosphate. Catalyzes the attachment of O-phosphoserine (Sep) to tRNA(Cys). This is O-phosphoserine--tRNA(Cys) ligase from Methanospirillum hungatei JF-1 (strain ATCC 27890 / DSM 864 / NBRC 100397 / JF-1).